A 157-amino-acid chain; its full sequence is Phosphopantetheine adenylyltransferase (157 aa).

Thr8 contributes to the substrate binding site. Residues Thr8–Phe9 and His16 each bind ATP. Positions 40, 72, and 86 each coordinate substrate. ATP-binding positions include Gly87–Arg89, Glu97, and Tyr122–Ser128.

This sequence belongs to the bacterial CoaD family. As to quaternary structure, homohexamer. Requires Mg(2+) as cofactor.

Its subcellular location is the cytoplasm. The enzyme catalyses (R)-4'-phosphopantetheine + ATP + H(+) = 3'-dephospho-CoA + diphosphate. Its pathway is cofactor biosynthesis; coenzyme A biosynthesis; CoA from (R)-pantothenate: step 4/5. Functionally, reversibly transfers an adenylyl group from ATP to 4'-phosphopantetheine, yielding dephospho-CoA (dPCoA) and pyrophosphate. This Prochlorococcus marinus (strain MIT 9215) protein is Phosphopantetheine adenylyltransferase.